The following is a 501-amino-acid chain: Lysine--tRNA ligase (501 aa).

The Mg(2+) site is built by E406 and E413.

The protein belongs to the class-II aminoacyl-tRNA synthetase family. Homodimer. Mg(2+) is required as a cofactor.

It localises to the cytoplasm. It carries out the reaction tRNA(Lys) + L-lysine + ATP = L-lysyl-tRNA(Lys) + AMP + diphosphate. This Halalkalibacterium halodurans (strain ATCC BAA-125 / DSM 18197 / FERM 7344 / JCM 9153 / C-125) (Bacillus halodurans) protein is Lysine--tRNA ligase (lysS).